The chain runs to 461 residues: Pup--protein ligase (461 aa).

Glu-9 contacts Mg(2+). Arg-53 contacts ATP. Residue Tyr-55 participates in Mg(2+) binding. Asp-57 (proton acceptor) is an active-site residue. A Mg(2+)-binding site is contributed by Glu-63. 2 residues coordinate ATP: Thr-66 and Trp-420.

Belongs to the Pup ligase/Pup deamidase family. Pup-conjugating enzyme subfamily.

It carries out the reaction ATP + [prokaryotic ubiquitin-like protein]-L-glutamate + [protein]-L-lysine = ADP + phosphate + N(6)-([prokaryotic ubiquitin-like protein]-gamma-L-glutamyl)-[protein]-L-lysine.. It functions in the pathway protein degradation; proteasomal Pup-dependent pathway. Its pathway is protein modification; protein pupylation. Functionally, catalyzes the covalent attachment of the prokaryotic ubiquitin-like protein modifier Pup to the proteasomal substrate proteins, thereby targeting them for proteasomal degradation. This tagging system is termed pupylation. The ligation reaction involves the side-chain carboxylate of the C-terminal glutamate of Pup and the side-chain amino group of a substrate lysine. The chain is Pup--protein ligase from Renibacterium salmoninarum (strain ATCC 33209 / DSM 20767 / JCM 11484 / NBRC 15589 / NCIMB 2235).